The primary structure comprises 387 residues: Flap endonuclease 1 (387 aa).

Residues 1–104 (MGIKGLSQLI…GELEKRKERQ (104 aa)) form an N-domain region. D34 lines the Mg(2+) pocket. A DNA-binding site is contributed by R70. Mg(2+) contacts are provided by D86, E158, E160, D179, and D181. Residues 122-253 (KMVMWNKRTT…KKALAMIKKY (132 aa)) are I-domain. E158 contacts DNA. Positions 231 and 233 each coordinate DNA. D233 contacts Mg(2+). The tract at residues 332 to 387 (SSRGKPTQTRLDGFFTPVASSSTTKKKAPAKKDDKKSATDKKRKAADASTSSKKKK) is disordered. Residues 338 to 346 (TQTRLDGFF) form an interaction with PCNA region. Residues 361–371 (AKKDDKKSATD) show a composition bias toward basic and acidic residues. A compositionally biased stretch (low complexity) spans 378 to 387 (DASTSSKKKK).

This sequence belongs to the XPG/RAD2 endonuclease family. FEN1 subfamily. Interacts with PCNA. Three molecules of FEN1 bind to one PCNA trimer with each molecule binding to one PCNA monomer. PCNA stimulates the nuclease activity without altering cleavage specificity. Mg(2+) serves as cofactor. Phosphorylated. Phosphorylation upon DNA damage induces relocalization to the nuclear plasma.

It is found in the nucleus. The protein resides in the nucleolus. It localises to the nucleoplasm. Its subcellular location is the mitochondrion. Structure-specific nuclease with 5'-flap endonuclease and 5'-3' exonuclease activities involved in DNA replication and repair. During DNA replication, cleaves the 5'-overhanging flap structure that is generated by displacement synthesis when DNA polymerase encounters the 5'-end of a downstream Okazaki fragment. It enters the flap from the 5'-end and then tracks to cleave the flap base, leaving a nick for ligation. Also involved in the long patch base excision repair (LP-BER) pathway, by cleaving within the apurinic/apyrimidinic (AP) site-terminated flap. Acts as a genome stabilization factor that prevents flaps from equilibrating into structures that lead to duplications and deletions. Also possesses 5'-3' exonuclease activity on nicked or gapped double-stranded DNA, and exhibits RNase H activity. Also involved in replication and repair of rDNA and in repairing mitochondrial DNA. In Naegleria gruberi (Amoeba), this protein is Flap endonuclease 1.